Reading from the N-terminus, the 428-residue chain is Glutamate-1-semialdehyde 2,1-aminomutase (428 aa).

N6-(pyridoxal phosphate)lysine is present on Lys-265.

The protein belongs to the class-III pyridoxal-phosphate-dependent aminotransferase family. HemL subfamily. As to quaternary structure, homodimer. Pyridoxal 5'-phosphate is required as a cofactor.

The protein localises to the cytoplasm. It carries out the reaction (S)-4-amino-5-oxopentanoate = 5-aminolevulinate. Its pathway is porphyrin-containing compound metabolism; protoporphyrin-IX biosynthesis; 5-aminolevulinate from L-glutamyl-tRNA(Glu): step 2/2. In Shewanella woodyi (strain ATCC 51908 / MS32), this protein is Glutamate-1-semialdehyde 2,1-aminomutase.